A 302-amino-acid polypeptide reads, in one-letter code: MDQQRLTHLKQLEAESIHIIREVAAEFDNPVMMYSIGKDSSVMLHLARKAFYPGKIPFPLLHVDTDWKFREMIEFRDRTAEKYGFELLVHKNPEGLAMGCSPFTHGSSKHTDIMKTQGLKQALNKYGFDAAFGGARRDEEKSRAKERVYSFRDKNHTWDPKNQRPELWKTYNGQVNKGESIRVFPLSNWTELDIWQYIYLENIEIVPLYLAAKRPVVERDGMLIMVDDDRMKLKEGEVIEEKSVRFRTLGCYPLTGAIESEANTLTGIIEEMLVATSSERQGRAIDHDQSGSMELKKRQGYF.

Residues 280–302 (RQGRAIDHDQSGSMELKKRQGYF) form a disordered region.

The protein belongs to the PAPS reductase family. CysD subfamily. Heterodimer composed of CysD, the smaller subunit, and CysN.

It carries out the reaction sulfate + ATP + H(+) = adenosine 5'-phosphosulfate + diphosphate. It participates in sulfur metabolism; hydrogen sulfide biosynthesis; sulfite from sulfate: step 1/3. In terms of biological role, with CysN forms the ATP sulfurylase (ATPS) that catalyzes the adenylation of sulfate producing adenosine 5'-phosphosulfate (APS) and diphosphate, the first enzymatic step in sulfur assimilation pathway. APS synthesis involves the formation of a high-energy phosphoric-sulfuric acid anhydride bond driven by GTP hydrolysis by CysN coupled to ATP hydrolysis by CysD. This is Sulfate adenylyltransferase subunit 2 from Vibrio vulnificus (strain CMCP6).